Reading from the N-terminus, the 111-residue chain is C-type lectin lectoxin-Enh2 (111 aa).

A signal peptide spans 1 to 23 (MGQFTVVSLGLLAMFLSLSGAKG). Cys26 and Cys37 are disulfide-bonded. The 76-residue stretch at 33-108 (RNGVCNKLFP…CASLHPFICQ (76 aa)) folds into the C-type lectin domain. Positions 72-74 (EPN) match the Mannose-binding motif. Ca(2+)-binding residues include Glu80, Asn95, and Asp96. Cys82 and Cys99 are oxidised to a cystine.

It belongs to the true venom lectin family. As to expression, expressed by the venom gland.

The protein localises to the secreted. Its function is as follows. Mannose-binding lectin which recognizes specific carbohydrate structures and agglutinates a variety of animal cells by binding to cell-surface glycoproteins and glycolipids. May be a calcium-dependent lectin. The chain is C-type lectin lectoxin-Enh2 from Pseudoferania polylepis (Macleay's water snake).